The chain runs to 480 residues: Probable pectin lyase F-2 (480 aa).

The signal sequence occupies residues 1-25; sequence MTLIRTVLMAAALLGASAHAQGVVG. The cysteines at positions 83 and 106 are disulfide-linked. An N-linked (GlcNAc...) asparagine glycan is attached at asparagine 111. Arginine 256 is a catalytic residue. A disulfide bond links cysteine 322 and cysteine 330. A compositionally biased stretch (low complexity) spans 386 to 401; the sequence is SSSAIPSSTPAPSSSA. Residues 386–436 are disordered; sequence SSSAIPSSTPAPSSSALAKRHGGHDRHGLGHIPHLTEGGPGAWHTPGPAPS.

The protein belongs to the polysaccharide lyase 1 family.

It localises to the secreted. The enzyme catalyses Eliminative cleavage of (1-&gt;4)-alpha-D-galacturonan methyl ester to give oligosaccharides with 4-deoxy-6-O-methyl-alpha-D-galact-4-enuronosyl groups at their non-reducing ends.. Its function is as follows. Pectinolytic enzymes consist of four classes of enzymes: pectin lyase, polygalacturonase, pectin methylesterase and rhamnogalacturonase. Among pectinolytic enzymes, pectin lyase is the most important in depolymerization of pectin, since it cleaves internal glycosidic bonds of highly methylated pectins. The chain is Probable pectin lyase F-2 (pelF-2) from Aspergillus terreus (strain NIH 2624 / FGSC A1156).